The following is a 399-amino-acid chain: DJ-1 protein homolog F (399 aa).

PfpI endopeptidase domains lie at 7-199 and 211-394; these read KSVL…ESLG and TSLL…TALG.

Belongs to the peptidase C56 family. As to quaternary structure, homotrimer.

Functionally, may be involved in oxidative stress response. The chain is DJ-1 protein homolog F (DJ1F) from Arabidopsis thaliana (Mouse-ear cress).